Here is a 158-residue protein sequence, read N- to C-terminus: Small ribosomal subunit protein uS9 (158 aa).

This sequence belongs to the universal ribosomal protein uS9 family.

This is Small ribosomal subunit protein uS9 from Rhodopseudomonas palustris (strain HaA2).